The primary structure comprises 312 residues: Methionyl-tRNA formyltransferase (312 aa).

109-112 is a binding site for (6S)-5,6,7,8-tetrahydrofolate; the sequence is SLLP.

It belongs to the Fmt family.

It catalyses the reaction L-methionyl-tRNA(fMet) + (6R)-10-formyltetrahydrofolate = N-formyl-L-methionyl-tRNA(fMet) + (6S)-5,6,7,8-tetrahydrofolate + H(+). Functionally, attaches a formyl group to the free amino group of methionyl-tRNA(fMet). The formyl group appears to play a dual role in the initiator identity of N-formylmethionyl-tRNA by promoting its recognition by IF2 and preventing the misappropriation of this tRNA by the elongation apparatus. The chain is Methionyl-tRNA formyltransferase from Anaeromyxobacter dehalogenans (strain 2CP-1 / ATCC BAA-258).